The sequence spans 279 residues: HTH-type transcriptional regulator HdfR (279 aa).

The 58-residue stretch at 1-58 (MDTELLKTFLEVSRTRHFGRAAESLYLTQSAVSFRIRQLENQLGVNLFTRHRNNIRLT) folds into the HTH lysR-type domain. The H-T-H motif DNA-binding region spans 18–37 (FGRAAESLYLTQSAVSFRIR).

It belongs to the LysR transcriptional regulatory family.

Its function is as follows. Negatively regulates the transcription of the flagellar master operon flhDC by binding to the upstream region of the operon. This chain is HTH-type transcriptional regulator HdfR, found in Escherichia fergusonii (strain ATCC 35469 / DSM 13698 / CCUG 18766 / IAM 14443 / JCM 21226 / LMG 7866 / NBRC 102419 / NCTC 12128 / CDC 0568-73).